A 187-amino-acid chain; its full sequence is Elongation factor P (187 aa).

Residue lysine 34 is modified to N6-(3,6-diaminohexanoyl)-5-hydroxylysine.

This sequence belongs to the elongation factor P family. In terms of processing, may be beta-lysylated on the epsilon-amino group of Lys-34 by the combined action of EpmA and EpmB, and then hydroxylated on the C5 position of the same residue by EpmC (if this protein is present). Lysylation is critical for the stimulatory effect of EF-P on peptide-bond formation. The lysylation moiety may extend toward the peptidyltransferase center and stabilize the terminal 3-CCA end of the tRNA. Hydroxylation of the C5 position on Lys-34 may allow additional potential stabilizing hydrogen-bond interactions with the P-tRNA.

The protein resides in the cytoplasm. It participates in protein biosynthesis; polypeptide chain elongation. Functionally, involved in peptide bond synthesis. Alleviates ribosome stalling that occurs when 3 or more consecutive Pro residues or the sequence PPG is present in a protein, possibly by augmenting the peptidyl transferase activity of the ribosome. Modification of Lys-34 is required for alleviation. This is Elongation factor P from Thioalkalivibrio sulfidiphilus (strain HL-EbGR7).